Here is a 135-residue protein sequence, read N- to C-terminus: Small ribosomal subunit protein bS16 (135 aa).

Residues 106 to 135 (TERRQKRLVVKSRRRQAKKEAEGKAAGAEA) are disordered. Residues 109-122 (RQKRLVVKSRRRQA) show a composition bias toward basic residues.

The protein belongs to the bacterial ribosomal protein bS16 family.

This Chlorobium phaeobacteroides (strain DSM 266 / SMG 266 / 2430) protein is Small ribosomal subunit protein bS16.